An 823-amino-acid polypeptide reads, in one-letter code: MSDRGKCQYPDDVDVIREREYPLLKDTTYLDHAGTTLYAKSLIESFSRDLTSNLYGNPHSMSAPSQLSTQRVDDIRLRALRFFSADPEEFDLVFVANATAAIKLVADSFRESTPQGFWYGYHVDSHTSLVGARELAGIGSRCFVTDAEVESWISQLDTEPVQGPRLFAYPAQSNMNGRRFPRGWCGRIRESAKDTYTLLDVASLVSTSPFDLSDASAAPDFAVLSFYKIFGFPDLGALIVRKSAGHIFDKRKFFGGGTVDMVLTQGTQWHAKKQSSIHERLEDGTLPFHNIIALGSAFDTHERLFGSMDNISSHTRFLAKRLYDRMTTLRHYNGESVCHVYKPSHSDYTDPSTQGPILAFNLRSSQGAWIGKSEVEKMASVRNIQIRSGTLCNPGGTAASLNWSGADMLRHFGAGMRCGDDHDIMDGRPTGILRVSLGAMSNLTDIDTFMGFIEEFYVEKSPNVCALVPPLEANLTHRSGFHVESLSVYPIKSCGAFKVPDGKRWEIRREGLVWDREWCLIHQGTGTALNQKRYPRMALIRPFIDLSHGVLRVTCGSIRSPSQKTLEIPLDRENSNLTTTSLCQNSSKPSTVCGDQVIVQAYSSPTVSAFFSDFLGVPCTLARFPPQSSTRLAEPRRGLGSRKSPLRPAMPGAFPQDTPTPEAERNPILLSNESPILLISRSSVNRLNETIKSSPTTTNSTGRKKAVAADVFRANIVVAEDFPQPVSAGRPYIEDHWESLRIGPDNLHFNVLGSCQRCQMVCVDQLTGVRGEEPYSTLAKTRKSGNKIYFGRHLAISSNGDGNSVNSRTVMVGDVVTPSYYGP.

Position 228 is an N6-(pyridoxal phosphate)lysine (lysine 228). Cysteine 392 is a catalytic residue. The tract at residues 628–667 (SSTRLAEPRRGLGSRKSPLRPAMPGAFPQDTPTPEAERNP) is disordered. The MOSC domain occupies 644 to 819 (SPLRPAMPGA…VMVGDVVTPS (176 aa)).

It belongs to the class-V pyridoxal-phosphate-dependent aminotransferase family. MOCOS subfamily. Pyridoxal 5'-phosphate is required as a cofactor.

It carries out the reaction Mo-molybdopterin + L-cysteine + AH2 = thio-Mo-molybdopterin + L-alanine + A + H2O. It functions in the pathway cofactor biosynthesis; molybdopterin biosynthesis. In terms of biological role, sulfurates the molybdenum cofactor. Sulfation of molybdenum is essential for xanthine dehydrogenase (XDH) and aldehyde oxidase (ADO) enzymes in which molybdenum cofactor is liganded by 1 oxygen and 1 sulfur atom in active form. In Aspergillus niger (strain ATCC MYA-4892 / CBS 513.88 / FGSC A1513), this protein is Molybdenum cofactor sulfurase.